Here is a 75-residue protein sequence, read N- to C-terminus: Small ribosomal subunit protein bS18c (75 aa).

The protein belongs to the bacterial ribosomal protein bS18 family. In terms of assembly, part of the 30S ribosomal subunit.

The protein localises to the plastid. The protein resides in the chloroplast. This chain is Small ribosomal subunit protein bS18c, found in Adiantum capillus-veneris (Maidenhair fern).